The sequence spans 461 residues: Phytase PHO112 (461 aa).

3 disulfide bridges follow: C62/C384, C261/C274, and C404/C412. R72, H73, R76, and S79 together coordinate 1D-myo-inositol hexakisphosphate. The Nucleophile role is filled by H73. N97 and N157 each carry an N-linked (GlcNAc...) asparagine glycan. Residue R169 coordinates 1D-myo-inositol hexakisphosphate. 2 N-linked (GlcNAc...) asparagine glycosylation sites follow: N229 and N248. K293 serves as a coordination point for 1D-myo-inositol hexakisphosphate. 2 N-linked (GlcNAc...) asparagine glycosylation sites follow: N302 and N313. Residues H334 and D335 each contribute to the 1D-myo-inositol hexakisphosphate site. N-linked (GlcNAc...) asparagine glycosylation is found at N437 and N452.

This sequence belongs to the histidine acid phosphatase family. In terms of assembly, monomer.

The protein localises to the secreted. The catalysed reaction is 1D-myo-inositol hexakisphosphate + H2O = 1D-myo-inositol 1,2,4,5,6-pentakisphosphate + phosphate. It carries out the reaction 1D-myo-inositol 1,2,4,5,6-pentakisphosphate + H2O = 1D-myo-inositol 1,2,5,6-tetrakisphosphate + phosphate. The enzyme catalyses 1D-myo-inositol 1,2,5,6-tetrakisphosphate + H2O = 1D-myo-inositol 1,2,6-trisphosphate + phosphate. It catalyses the reaction 1D-myo-inositol 1,2,6-trisphosphate + H2O = 1D-myo-inositol 1,2-bisphosphate + phosphate. The catalysed reaction is 1D-myo-inositol 1,2-bisphosphate + H2O = 1D-myo-inositol 2-phosphate + phosphate. Its function is as follows. Catalyzes the phosphate monoester hydrolysis of phytic acid (myo-inositol hexakisphosphate), which results in the stepwise formation of myo-inositol pentakis-, tetrakis-, tris-, bis-, and monophosphates, as well as the liberation of inorganic phosphate. Myo-inositol 2-monophosphate is the end product. Responsible of about 25% of the phytase activity. The residual phytase activity might be contributed by other cytosolic or cellular enzymes such as acid phosphatase that also degraded the substrate phytate. Is essential for human tissue damage during infection. The polypeptide is Phytase PHO112 (PHO112) (Candida albicans (strain SC5314 / ATCC MYA-2876) (Yeast)).